The chain runs to 219 residues: uncharacterized protein (219 aa).

Positions proline 139 to serine 154 are enriched in basic residues. The interval proline 139 to threonine 160 is disordered. Residues lysine 159–isoleucine 217 enclose the LysM domain.

This is an uncharacterized protein from Bacillus subtilis (strain 168).